Consider the following 77-residue polypeptide: Large ribosomal subunit protein uL29 (77 aa).

The protein belongs to the universal ribosomal protein uL29 family.

This chain is Large ribosomal subunit protein uL29, found in Mycolicibacterium gilvum (strain PYR-GCK) (Mycobacterium gilvum (strain PYR-GCK)).